The primary structure comprises 401 residues: CCA-adding enzyme (401 aa).

Residues Gly-32 and Arg-35 each coordinate ATP. Positions 32 and 35 each coordinate CTP. Mg(2+)-binding residues include Asp-45 and Asp-47. The ATP site is built by Arg-116, Asp-159, Arg-162, Arg-165, and Arg-168. CTP contacts are provided by Arg-116, Asp-159, Arg-162, Arg-165, and Arg-168.

The protein belongs to the tRNA nucleotidyltransferase/poly(A) polymerase family. Bacterial CCA-adding enzyme type 3 subfamily. As to quaternary structure, homodimer. It depends on Mg(2+) as a cofactor.

It catalyses the reaction a tRNA precursor + 2 CTP + ATP = a tRNA with a 3' CCA end + 3 diphosphate. The enzyme catalyses a tRNA with a 3' CCA end + 2 CTP + ATP = a tRNA with a 3' CCACCA end + 3 diphosphate. Functionally, catalyzes the addition and repair of the essential 3'-terminal CCA sequence in tRNAs without using a nucleic acid template. Adds these three nucleotides in the order of C, C, and A to the tRNA nucleotide-73, using CTP and ATP as substrates and producing inorganic pyrophosphate. tRNA 3'-terminal CCA addition is required both for tRNA processing and repair. Also involved in tRNA surveillance by mediating tandem CCA addition to generate a CCACCA at the 3' terminus of unstable tRNAs. While stable tRNAs receive only 3'-terminal CCA, unstable tRNAs are marked with CCACCA and rapidly degraded. The chain is CCA-adding enzyme from Streptococcus mutans serotype c (strain ATCC 700610 / UA159).